A 78-amino-acid chain; its full sequence is Putative membrane protein insertion efficiency factor (78 aa).

This sequence belongs to the UPF0161 family.

It localises to the cell membrane. Its function is as follows. Could be involved in insertion of integral membrane proteins into the membrane. The chain is Putative membrane protein insertion efficiency factor from Bacillus cereus (strain G9842).